The sequence spans 309 residues: UDP-N-acetylenolpyruvoylglucosamine reductase (309 aa).

The FAD-binding PCMH-type domain occupies R34–G198. Residue R178 is part of the active site. The active-site Proton donor is the S227. E297 is a catalytic residue.

This sequence belongs to the MurB family. FAD serves as cofactor.

Its subcellular location is the cytoplasm. It catalyses the reaction UDP-N-acetyl-alpha-D-muramate + NADP(+) = UDP-N-acetyl-3-O-(1-carboxyvinyl)-alpha-D-glucosamine + NADPH + H(+). It functions in the pathway cell wall biogenesis; peptidoglycan biosynthesis. Cell wall formation. The sequence is that of UDP-N-acetylenolpyruvoylglucosamine reductase from Acidiphilium cryptum (strain JF-5).